The sequence spans 424 residues: COUP transcription factor 1 (424 aa).

Positions 1-82 (MAMVVSSWRD…QGPPGSGQSQ (82 aa)) are disordered. Low complexity predominate over residues 39-68 (EQQQQQAGSGAPHTPQTPGQPGAPATPGTA). Residues 84-159 (HIECVVCGDK…VGMRREAVQR (76 aa)) constitute a DNA-binding region (nuclear receptor). 2 consecutive NR C4-type zinc fingers follow at residues 87-107 (CVVC…CEGC) and 123-147 (CRAN…LKKC). Residues 185–411 (YLSGYISLLL…TLIRDMLLSG (227 aa)) enclose the NR LBD domain.

The protein belongs to the nuclear hormone receptor family. NR2 subfamily. Binds DNA as dimer; homodimer and probable heterodimer with NR2F6. Interacts with GTF2B; this interaction is direct. Interacts with COPS2.

It is found in the nucleus. Coup (chicken ovalbumin upstream promoter) transcription factor binds to the ovalbumin promoter and, in conjunction with another protein (S300-II) stimulates initiation of transcription. Binds to both direct repeats and palindromes of the 5'-AGGTCA-3' motif. Represses transcriptional activity of LHCG. The polypeptide is COUP transcription factor 1 (NR2F1) (Bos taurus (Bovine)).